The sequence spans 371 residues: Protein maelstrom 1 (371 aa).

Positions 2-68 form a DNA-binding region, HMG box; it reads AQNKPNAFMA…VLERESKTER (67 aa).

This sequence belongs to the maelstrom family.

It localises to the cytoplasm. The protein resides in the nucleus. Involved both in the piRNA and miRNA metabolic processes. As a component of the meiotic nuage, plays a central role during oogenesis by repressing transposable elements and preventing their mobilization, which is essential for the germline integrity. Repression of transposable elements is mediated via the piRNA metabolic process, which mediates the repression of transposable elements during meiosis by forming complexes composed of piRNAs and Piwi proteins and governs the repression of transposons. As a nuclear component, it is required for proper differentiation in the germline stem cell (GSC) lineage by repressing microRNA-7 (miR-7), thereby acting as an indirect regulator of bag-of-marbles (Bam). Acts by binding to the promoter of miR-7 gene and repressing its expression; miR-7 repression alleviates the Bam repression by miR-7, thereby allowing differentiation in the germline stem cell (GSC) lineage. The polypeptide is Protein maelstrom 1 (mael1) (Drosophila pseudoobscura pseudoobscura (Fruit fly)).